Consider the following 458-residue polypeptide: UDP-N-acetylmuramate--L-alanine ligase (458 aa).

Residue 118 to 124 (GTHGKTT) coordinates ATP.

The protein belongs to the MurCDEF family.

It is found in the cytoplasm. It catalyses the reaction UDP-N-acetyl-alpha-D-muramate + L-alanine + ATP = UDP-N-acetyl-alpha-D-muramoyl-L-alanine + ADP + phosphate + H(+). Its pathway is cell wall biogenesis; peptidoglycan biosynthesis. In terms of biological role, cell wall formation. The chain is UDP-N-acetylmuramate--L-alanine ligase from Clostridium botulinum (strain Loch Maree / Type A3).